A 929-amino-acid polypeptide reads, in one-letter code: MTTPISTSRAASIVSSILPYSRYLKRVLENESELQQELLEQLHNPFTREEMLGFLQDSTAHLIDEADLHRLLRQLRKRVILRLAARDLAGLADLNEVMATMTALADVTIQFSLEFLHAAMVQPGHFGKPKGEKTGTEQQLLIVAMGKLGGGELNVSSDVDLVFIYPEDGETDGSKSITNHEFFLRLGRKLIASLNDYTVDGYVFRVDMRLRPYGENSPLAISLPMLEDYFVTQGREWERHAWIKSRVITGSSIAEAALMELIVRPFVFRKYLDFEAYEAMRSLHTQLRKEVDRRELHDNIKLGPGGIREIEFITQVFQLIRGGRDADLCIRPTLGVLQRLKQKQPLPEQTVEELIEAYYFLRKLEHRLQYLDDQQTQNLPQHSDDQILIAKSMGFTDYTGFLKHLDLHRQNVTRHFEQIFAVRRKAIKLGTFARIRPEQTNDNEIVKVFSNQLKTLGYIDPDKITARVQQFYDGTTFRQLSHPNQERILELMPTLMEVVTRFPPVEITLERMLRLLEKIGQYSAYLALLQEYPQTLPRVAKLVSISQWASDYLGSHPILLDELLAPSGLHTLPDWPTLKTELIHQLHHGNIPKAQIIEWQMDVLRHFQHAQVFRLLAVDLEGNLLLETLSDHLTALADLILDNVLQLAWQGLKKKHRKSPAFAIIGYGKLGGKELGYVSDLDIVYLYQDNHPDAMEIYTKLAQNINLWLTSHTSAGVLYETDLRLRPNGTSGLLVNSIEAFSLYQHEQAWVWEHQALTRARFVIGDSEVGEKFEQMRKNILCQPRDMENLKREILMMRTKMLEAHPNSTPLFDVKHDHGGIIDVEFIVQYLVLGYAHRYPQLTSNIGNIALLKLAGELGLTSAEKANAAFIAYRELRRTQHQLRLSGIPEATGTALPKDVSQKFARVTSDYLSSARRAVFQLWEDVFGT.

Positions 1-422 (MTTPISTSRA…TRHFEQIFAV (422 aa)) are adenylyl removase. The adenylyl transferase stretch occupies residues 429–929 (LGTFARIRPE…FQLWEDVFGT (501 aa)).

The protein belongs to the GlnE family. Mg(2+) is required as a cofactor.

The catalysed reaction is [glutamine synthetase]-O(4)-(5'-adenylyl)-L-tyrosine + phosphate = [glutamine synthetase]-L-tyrosine + ADP. It catalyses the reaction [glutamine synthetase]-L-tyrosine + ATP = [glutamine synthetase]-O(4)-(5'-adenylyl)-L-tyrosine + diphosphate. Functionally, involved in the regulation of glutamine synthetase GlnA, a key enzyme in the process to assimilate ammonia. When cellular nitrogen levels are high, the C-terminal adenylyl transferase (AT) inactivates GlnA by covalent transfer of an adenylyl group from ATP to specific tyrosine residue of GlnA, thus reducing its activity. Conversely, when nitrogen levels are low, the N-terminal adenylyl removase (AR) activates GlnA by removing the adenylyl group by phosphorolysis, increasing its activity. The regulatory region of GlnE binds the signal transduction protein PII (GlnB) which indicates the nitrogen status of the cell. The polypeptide is Bifunctional glutamine synthetase adenylyltransferase/adenylyl-removing enzyme (Nitrosomonas eutropha (strain DSM 101675 / C91 / Nm57)).